The following is a 714-amino-acid chain: Glutamine-dependent NAD(+) synthetase (714 aa).

The CN hydrolase domain maps to Ile-5–Leu-275. Residue Glu-45 is the Proton acceptor; for glutaminase activity of the active site. The For glutaminase activity role is filled by Lys-114. Residue Cys-175 is the Nucleophile; for glutaminase activity of the active site. The interval Tyr-329–Asp-714 is ligase. Position 359-366 (Pro-359–Ser-366) interacts with ATP. Residue Ser-361 is part of the active site.

It in the C-terminal section; belongs to the NAD synthetase family.

It catalyses the reaction deamido-NAD(+) + L-glutamine + ATP + H2O = L-glutamate + AMP + diphosphate + NAD(+) + H(+). Its pathway is cofactor biosynthesis; NAD(+) biosynthesis; NAD(+) from deamido-NAD(+) (L-Gln route): step 1/1. This is Glutamine-dependent NAD(+) synthetase (QNS1) from Saccharomyces cerevisiae (strain ATCC 204508 / S288c) (Baker's yeast).